The primary structure comprises 347 residues: Neutral protease 2 homolog MGG_10927 (347 aa).

Positions 1–19 (MKYSVGITALLATLAQGAA) are cleaved as a signal peptide. Positions 20-176 (VMSKRDIPLD…RSYLAKRTMV (157 aa)) are excised as a propeptide. 2 cysteine pairs are disulfide-bonded: Cys180-Cys250 and Cys257-Cys275. His299 provides a ligand contact to Zn(2+). Residue Glu300 is part of the active site. His303 serves as a coordination point for Zn(2+).

This sequence belongs to the peptidase M35 family. The cofactor is Zn(2+).

The protein resides in the secreted. It catalyses the reaction Preferential cleavage of bonds with hydrophobic residues in P1'. Also 3-Asn-|-Gln-4 and 8-Gly-|-Ser-9 bonds in insulin B chain.. Functionally, secreted metalloproteinase that allows assimilation of proteinaceous substrates. Shows high activities on basic nuclear substrates such as histone and protamine. The sequence is that of Neutral protease 2 homolog MGG_10927 from Pyricularia oryzae (strain 70-15 / ATCC MYA-4617 / FGSC 8958) (Rice blast fungus).